A 624-amino-acid chain; its full sequence is LRR receptor kinase BAK1 (624 aa).

The first 25 residues, 1 to 25 (MAAPRWAVWAVLLLRLLVPAARVLA), serve as a signal peptide directing secretion. Residues 26 to 237 (NMEGDALHSL…QSPGSSSSTG (212 aa)) lie on the Extracellular side of the membrane. LRR repeat units lie at residues 91 to 115 (LKNL…LGNL), 117 to 139 (NLVS…LGNL), 140 to 163 (LKLR…LTAI), and 164 to 188 (TALQ…SFSL). N-linked (GlcNAc...) asparagine glycans are attached at residues N103, N114, N127, N149, and N175. Positions 205–236 (TTKPCPGAPPFSPPPPYNPPTPVQSPGSSSST) are disordered. The segment covering 210-227 (PGAPPFSPPPPYNPPTPV) has biased composition (pro residues). Residues 238–258 (AIAGGVAAGAALLFAIPAIGF) traverse the membrane as a helical segment. The Cytoplasmic portion of the chain corresponds to 259–624 (AWYRRRKPQE…LHAVELSGPR (366 aa)). The region spanning 301–588 (FSNKNILGRG…GLAERWEEWQ (288 aa)) is the Protein kinase domain. ATP-binding positions include 307-315 (LGRGGFGKV) and K329. D428 functions as the Proton acceptor in the catalytic mechanism.

The protein belongs to the protein kinase superfamily. Ser/Thr protein kinase family. As to quaternary structure, forms homodimers. Interacts with BRI1. Interacts with REM4.1.

It localises to the cell membrane. It carries out the reaction L-seryl-[protein] + ATP = O-phospho-L-seryl-[protein] + ADP + H(+). The enzyme catalyses L-threonyl-[protein] + ATP = O-phospho-L-threonyl-[protein] + ADP + H(+). Its function is as follows. LRR receptor kinase involved in defense response. Does not seem to be required specifically for XA21-mediated immunity or basal resistance to Xanthomonas oryzae pv. oryzae (Xoo), or immunity to Magnaporthe oryzae. Involved in brassinosteroid (BR) signaling pathway. Acts as a coreceptor of BRI1. Forms at the plasma membrane a receptor complex with BRI1 which is activated in response to brassinolide. Phosphorylates BRI1. Required for normal plant growth and leaf development. Possesses kinase activity in vitro. This chain is LRR receptor kinase BAK1, found in Oryza sativa subsp. indica (Rice).